Here is a 311-residue protein sequence, read N- to C-terminus: Olfactory receptor 4S2 (311 aa).

Topologically, residues 1 to 23 are extracellular; that stretch reads MEKINNVTEFIFWGLSQSPEIEK. A glycan (N-linked (GlcNAc...) asparagine) is linked at Asn-6. A helical transmembrane segment spans residues 24–47; it reads VCFVVFSFFYIIILLGNLLIMLTV. The Cytoplasmic segment spans residues 48–55; that stretch reads CLSNLFKS. Residues 56–77 traverse the membrane as a helical segment; it reads PMYFFLSFLSFVDICYSSVTAP. Residues 78 to 98 lie on the Extracellular side of the membrane; sequence KMIVDLLAKDKTISYVGCMLQ. Cys-95 and Cys-187 are oxidised to a cystine. Residues 99–118 form a helical membrane-spanning segment; it reads LFGVHFFGCTEIFILTVMAY. The Cytoplasmic segment spans residues 119–137; that stretch reads DRYVAICKPLHYMTIMNRE. The chain crosses the membrane as a helical span at residues 138–156; that stretch reads TCNKMLLGTWVGGFLHSII. Residues 157–193 are Extracellular-facing; that stretch reads QVALVVQLPFCGPNEIDHYFCDVHPVLKLACTETYIV. Residues 194 to 217 traverse the membrane as a helical segment; it reads GVVVTANSGTIALGSFVILLISYS. Over 218–233 the chain is Cytoplasmic; that stretch reads IILVSLRKQSAEGRRK. Residues 234-256 form a helical membrane-spanning segment; the sequence is ALSTCGSHIAMVVIFFGPCTFMY. Residues 257-267 lie on the Extracellular side of the membrane; sequence MRPDTTFSEDK. The helical transmembrane segment at 268–287 threads the bilayer; sequence MVAVFYTIITPMLNPLIYTL. Residues 288-311 are Cytoplasmic-facing; it reads RNAEVKNAMKKLWGRNVFLEAKGK.

This sequence belongs to the G-protein coupled receptor 1 family.

The protein localises to the cell membrane. Its function is as follows. Odorant receptor. The polypeptide is Olfactory receptor 4S2 (OR4S2) (Homo sapiens (Human)).